The sequence spans 261 residues: Transcription repressor OFP15 (261 aa).

Residues 1–28 (MKLPFLNKNHSTSSYSSNSSSSSWPWPS) form a disordered region. Low complexity predominate over residues 11-28 (STSSYSSNSSSSSWPWPS). The OVATE domain occupies 112–172 (FSLESDDPYS…FAAFVDLLMN (61 aa)).

As to quaternary structure, interacts with BLH1 and BLH3. As to expression, expressed in roots, cauline leaves, shoots, flower buds and siliques.

The protein resides in the nucleus. Its function is as follows. Transcriptional repressor that regulates multiple aspects of plant growth and development through the regulation of BEL1-LIKE (BLH) and KNOX TALE (KNAT) homeodomain transcription factors. The chain is Transcription repressor OFP15 (OFP15) from Arabidopsis thaliana (Mouse-ear cress).